The chain runs to 365 residues: Eukaryotic translation initiation factor 3 subunit H (365 aa).

Residues 11–160 enclose the MPN domain; it reads VKVDALVVMK…LRAFRLSSKF (150 aa).

It belongs to the eIF-3 subunit H family. In terms of assembly, component of the eukaryotic translation initiation factor 3 (eIF-3) complex.

The protein localises to the cytoplasm. Functionally, component of the eukaryotic translation initiation factor 3 (eIF-3) complex, which is involved in protein synthesis of a specialized repertoire of mRNAs and, together with other initiation factors, stimulates binding of mRNA and methionyl-tRNAi to the 40S ribosome. The eIF-3 complex specifically targets and initiates translation of a subset of mRNAs involved in cell proliferation. In Aspergillus oryzae (strain ATCC 42149 / RIB 40) (Yellow koji mold), this protein is Eukaryotic translation initiation factor 3 subunit H.